Here is a 1434-residue protein sequence, read N- to C-terminus: Probable ATP-dependent RNA helicase spindle-E (1434 aa).

The region spanning 125-292 (LAAINAHPVI…FATTNSIPPV (168 aa)) is the Helicase ATP-binding domain. Position 138–145 (138–145 (GETGCGKT)) interacts with ATP. A DEAH box motif is present at residues 238-241 (DEVH). The 188-residue stretch at 339-526 (KIIVIIDNME…NSVLKAKVLN (188 aa)) folds into the Helicase C-terminal domain. One can recognise a Tudor domain in the interval 938–1001 (AGDITKGMMV…RLMPRELTEQ (64 aa)).

The protein belongs to the DEAD box helicase family. DEAH subfamily.

The protein resides in the cytoplasm. It carries out the reaction ATP + H2O = ADP + phosphate + H(+). In terms of biological role, probable ATP-binding RNA helicase which plays a central role during spermatogenesis and oogenesis by repressing transposable elements and preventing their mobilization, which is essential for the germline integrity. Acts via the piRNA metabolic process, which mediates the repression of transposable elements during meiosis by forming complexes composed of piRNAs and Piwi and govern the methylation and subsequent repression of transposons. Involved in the repression of LTR retrotransposon copia. Also involved in telomere regulation by repressing specialized telomeric retroelements HeT-A, TAHRE, and TART; Drosophila telomeres being maintained by transposition of specialized telomeric retroelements. Involved in telomeric trans-silencing, a repression mechanism by which a transposon or a transgene inserted in subtelomeric heterochromatin has the capacity to repress in trans in the female germline, a homologous transposon, or transgene located in euchromatin. Involved in the repression of testis-expressed Stellate genes by the homologous Su(Ste) repeats. Required for anteroposterior and dorsoventral axis formation during oogenesis. This chain is Probable ATP-dependent RNA helicase spindle-E (spn-E), found in Drosophila sechellia (Fruit fly).